A 476-amino-acid chain; its full sequence is Transcriptional regulator claA (476 aa).

Residues 25–52 (CDTCLKAKIKCSQAKPTCARCLQQGRQC) constitute a DNA-binding region (zn(2)-C6 fungal-type). Residues 63 to 92 (PSTKNLPLDQLQQPKGRTAGGTARRSLSRR) are disordered. The segment covering 64 to 77 (STKNLPLDQLQQPK) has biased composition (polar residues).

The protein localises to the nucleus. Its function is as follows. Transcriptional regulator; part of the cla gene cluster that produces clavatol and ortho-quinone methide. The clavatol biosynthesis cluster cla and the terrestric acid cluster tra are both involved in the production of peniphenones and penilactones. The sequence is that of Transcriptional regulator claA from Penicillium crustosum (Blue mold fungus).